A 422-amino-acid polypeptide reads, in one-letter code: MNSQLLFDDLAQRGLIAQTTDLEQLIALFRQPQTLYCGFDPTAGSLHIGHLVPLIMLKRFQDAGHQGIALIGGATGMIGDPSFKASERSLNSAETVAAWVNALATQIQQLMTPHLTQPLVMVNNADWMQSIGVIAFFRDIGKHFSVNAMIQRESVKQRLARPDQGISFTEFSYSLLQSYDFAQLNQTHQCALQIGGNDQWGNIVSGIDLTRRLNGTNVHGLTLPLITKSDGTKFGKTEGGAIWLDAAKTSPYMFYQFWLNCDDADVYRFLRYYTFLSVEQIEQLEATDKAQVGKPSAQRILAEEMTRFVHGQAGLESAQRISQALFSGQLNQLNLAELKQLEQDGLPCRQLAHVSDVVTLLLETGLASSKRQAREWLENGAIRINGERWHELTLAQTFALYDQYYIVQRGKKQFAMVKLAQV.

Tyr36 is a binding site for L-tyrosine. The short motif at 41–50 (PTAGSLHIGH) is the 'HIGH' region element. The L-tyrosine site is built by Tyr173 and Gln177. The 'KMSKS' region motif lies at 233 to 237 (KFGKT). Residue Lys236 coordinates ATP. In terms of domain architecture, S4 RNA-binding spans 355–419 (SDVVTLLLET…GKKQFAMVKL (65 aa)).

This sequence belongs to the class-I aminoacyl-tRNA synthetase family. TyrS type 1 subfamily. As to quaternary structure, homodimer.

The protein localises to the cytoplasm. It catalyses the reaction tRNA(Tyr) + L-tyrosine + ATP = L-tyrosyl-tRNA(Tyr) + AMP + diphosphate + H(+). Functionally, catalyzes the attachment of tyrosine to tRNA(Tyr) in a two-step reaction: tyrosine is first activated by ATP to form Tyr-AMP and then transferred to the acceptor end of tRNA(Tyr). The sequence is that of Tyrosine--tRNA ligase 1 from Vibrio vulnificus (strain CMCP6).